Consider the following 141-residue polypeptide: Putative pre-16S rRNA nuclease (141 aa).

The protein belongs to the YqgF nuclease family.

It is found in the cytoplasm. Its function is as follows. Could be a nuclease involved in processing of the 5'-end of pre-16S rRNA. In Cupriavidus pinatubonensis (strain JMP 134 / LMG 1197) (Cupriavidus necator (strain JMP 134)), this protein is Putative pre-16S rRNA nuclease.